Here is a 351-residue protein sequence, read N- to C-terminus: Glycerol-1-phosphate dehydrogenase [NAD(P)+] (351 aa).

NAD(+)-binding positions include 97-101 (GKTID) and 119-122 (TAPS). Residue Asp-124 coordinates substrate. Ser-128 serves as a coordination point for NAD(+). Position 171 (Asp-171) interacts with substrate. Zn(2+)-binding residues include Asp-171 and His-251. Residue His-255 participates in substrate binding. His-267 contributes to the Zn(2+) binding site.

The protein belongs to the glycerol-1-phosphate dehydrogenase family. In terms of assembly, homodimer. Zn(2+) serves as cofactor.

It localises to the cytoplasm. The catalysed reaction is sn-glycerol 1-phosphate + NAD(+) = dihydroxyacetone phosphate + NADH + H(+). It carries out the reaction sn-glycerol 1-phosphate + NADP(+) = dihydroxyacetone phosphate + NADPH + H(+). It participates in membrane lipid metabolism; glycerophospholipid metabolism. Its function is as follows. Catalyzes the NAD(P)H-dependent reduction of dihydroxyacetonephosphate (DHAP or glycerone phosphate) to glycerol 1-phosphate (G1P). The G1P thus generated is used as the glycerophosphate backbone of phospholipids in the cellular membranes of Archaea. This Metallosphaera sedula (strain ATCC 51363 / DSM 5348 / JCM 9185 / NBRC 15509 / TH2) protein is Glycerol-1-phosphate dehydrogenase [NAD(P)+].